A 434-amino-acid polypeptide reads, in one-letter code: Trigger factor (434 aa).

Residues 161-246 (EDRATIDFTG…LKKVEERELP (86 aa)) form the PPIase FKBP-type domain.

Belongs to the FKBP-type PPIase family. Tig subfamily.

Its subcellular location is the cytoplasm. It catalyses the reaction [protein]-peptidylproline (omega=180) = [protein]-peptidylproline (omega=0). In terms of biological role, involved in protein export. Acts as a chaperone by maintaining the newly synthesized protein in an open conformation. Functions as a peptidyl-prolyl cis-trans isomerase. In Pectobacterium atrosepticum (strain SCRI 1043 / ATCC BAA-672) (Erwinia carotovora subsp. atroseptica), this protein is Trigger factor.